The primary structure comprises 314 residues: Olfactory receptor 4Q2 (314 aa).

Residues 1 to 26 (MDKNQTEVMREFFLSGFSQTPSIEAG) are Extracellular-facing. N-linked (GlcNAc...) asparagine glycosylation is present at N4. A helical membrane pass occupies residues 27–47 (LFVLFLFFYMSIWVGNVLIMV). Residues 48–61 (TVASDKYLNSSPMY) are Cytoplasmic-facing. The helical transmembrane segment at 62 to 84 (FLLGNLSFLDLCYSTVTTPKLLA) threads the bilayer. The Extracellular portion of the chain corresponds to 85 to 98 (DFFNHEKLISYDQC). C98 and C181 are disulfide-bonded. Residues 99-119 (IVQLFFLHFVGAAEMFLLTVM) traverse the membrane as a helical segment. At 120-142 (AYDRYVAICRPLHYTTVMSRGLC) the chain is on the cytoplasmic side. The chain crosses the membrane as a helical span at residues 143 to 163 (CVLVAASWMGGFVHSTVQTIL). The Extracellular portion of the chain corresponds to 164 to 196 (TVHLPFCGPNQVENTFFCDVPPVIKLACADTFV). A helical transmembrane segment spans residues 197–217 (IELLMVSNSGLISTISFVVLI). The Cytoplasmic portion of the chain corresponds to 218–236 (SSYTTILVKIRSKEGRRKA). Residues 237–257 (LSTCASHLMVVTLFFGPCIFI) traverse the membrane as a helical segment. Over 258–268 (YARPFSTFSVD) the chain is Extracellular. A helical membrane pass occupies residues 269–289 (KMVSVLYNVITPMLNPLIYTL). Residues 290–314 (RNKEVKSAMQKLWVRNGLTWKKQET) are Cytoplasmic-facing.

This sequence belongs to the G-protein coupled receptor 1 family.

The protein resides in the cell membrane. Odorant receptor. The sequence is that of Olfactory receptor 4Q2 (OR4Q2) from Homo sapiens (Human).